The chain runs to 189 residues: Putative manganese efflux pump MntP (189 aa).

6 consecutive transmembrane segments (helical) span residues 3–23 (IVST…AAVS), 41–61 (MIFG…GRVA), 62–82 (ADYV…FLGI), 103–123 (SFIL…SVGV), 132–152 (IVPV…AGVM), and 167–187 (IIGG…HLYG).

It belongs to the MntP (TC 9.B.29) family.

The protein resides in the cell inner membrane. In terms of biological role, probably functions as a manganese efflux pump. The protein is Putative manganese efflux pump MntP of Methylobacillus flagellatus (strain ATCC 51484 / DSM 6875 / VKM B-1610 / KT).